Here is a 278-residue protein sequence, read N- to C-terminus: Probable endonuclease 4 (278 aa).

9 residues coordinate Zn(2+): H69, H109, E145, D179, H182, H216, D229, H231, and E261.

The protein belongs to the AP endonuclease 2 family. The cofactor is Zn(2+).

The enzyme catalyses Endonucleolytic cleavage to 5'-phosphooligonucleotide end-products.. Its function is as follows. Endonuclease IV plays a role in DNA repair. It cleaves phosphodiester bonds at apurinic or apyrimidinic (AP) sites, generating a 3'-hydroxyl group and a 5'-terminal sugar phosphate. This is Probable endonuclease 4 from Buchnera aphidicola subsp. Baizongia pistaciae (strain Bp).